The chain runs to 358 residues: NAC domain-containing protein 12 (358 aa).

In terms of domain architecture, NAC spans 16 to 177 (VPPGFRFHPT…GWVVCRVFRK (162 aa)). The DNA-binding element occupies 116 to 183 (IGLRKTLVFY…VFRKKNYQKI (68 aa)).

Stems and roots, specifically in interfascicular fibers (sclerenchyma), cells differentiating into vascular vessels (cambium), and xylem.

It localises to the nucleus. In terms of biological role, transcriptional activator of genes involved in biosynthesis of secondary walls. Together with NST1, required for the secondary cell wall thickening and lignification of sclerenchymatous fibers and secondary xylem vessels (tracheary elements). Seems to repress the secondary cell wall thickening of xylary fibers. May also regulate the secondary cell wall lignification of other tissues. Binds to and activates the promoter of MYB46. This is NAC domain-containing protein 12 from Arabidopsis thaliana (Mouse-ear cress).